The chain runs to 442 residues: 3-dehydroquinate synthase, chloroplastic (442 aa).

The N-terminal 58 residues, 1–58 (MAANTISLSNVAASKNLNSFQSRAFIAPPTIFFPVASAKSKPGELSLSSTTLSRSRVR), are a transit peptide targeting the chloroplast. Alanine 59 carries the post-translational modification N-acetylalanine. Residues asparagine 119, 150 to 152 (DGE), lysine 155, 183 to 188 (GGVIGD), 208 to 209 (TT), lysine 221, lysine 230, and 248 to 251 (TLNT) contribute to the NAD(+) site. Glutamate 263 provides a ligand contact to a divalent metal cation. Residue lysine 305 participates in NAD(+) binding. A divalent metal cation is bound by residues histidine 326 and histidine 343.

It belongs to the sugar phosphate cyclases superfamily. Dehydroquinate synthase family. In terms of assembly, homodimer. A divalent metal cation is required as a cofactor. It depends on NAD(+) as a cofactor.

It is found in the plastid. It localises to the chloroplast. It catalyses the reaction 7-phospho-2-dehydro-3-deoxy-D-arabino-heptonate = 3-dehydroquinate + phosphate. Its pathway is metabolic intermediate biosynthesis; chorismate biosynthesis; chorismate from D-erythrose 4-phosphate and phosphoenolpyruvate: step 2/7. In terms of biological role, catalyzes the second step in the shikimate pathway. This is 3-dehydroquinate synthase, chloroplastic (DHQS) from Arabidopsis thaliana (Mouse-ear cress).